The primary structure comprises 122 residues: Immunoglobulin lambda variable 8-61 (122 aa).

Residues 1–24 form the signal peptide; sequence MSVPTMAWMMLLLGLLAYGSGVDS. The tract at residues 25-49 is framework-1; sequence QTVVTQEPSFSVSPGGTVTLTCGLS. The 98-residue stretch at 25 to 122 folds into the Ig-like domain; the sequence is QTVVTQEPSF…YCVLYMGSGI (98 aa). Residues cysteine 46 and cysteine 114 are joined by a disulfide bond. A complementarity-determining-1 region spans residues 50–58; the sequence is SGSVSTSYY. Positions 59–75 are framework-2; sequence PSWYQQTPGQAPRTLIY. The complementarity-determining-2 stretch occupies residues 76-78; that stretch reads STN. The tract at residues 79–114 is framework-3; that stretch reads TRSSGVPDRFSGSILGNKAALTITGAQADDESDYYC. Residues 115-122 are complementarity-determining-3; the sequence is VLYMGSGI.

Immunoglobulins are composed of two identical heavy chains and two identical light chains; disulfide-linked.

The protein resides in the secreted. It localises to the cell membrane. V region of the variable domain of immunoglobulin light chains that participates in the antigen recognition. Immunoglobulins, also known as antibodies, are membrane-bound or secreted glycoproteins produced by B lymphocytes. In the recognition phase of humoral immunity, the membrane-bound immunoglobulins serve as receptors which, upon binding of a specific antigen, trigger the clonal expansion and differentiation of B lymphocytes into immunoglobulins-secreting plasma cells. Secreted immunoglobulins mediate the effector phase of humoral immunity, which results in the elimination of bound antigens. The antigen binding site is formed by the variable domain of one heavy chain, together with that of its associated light chain. Thus, each immunoglobulin has two antigen binding sites with remarkable affinity for a particular antigen. The variable domains are assembled by a process called V-(D)-J rearrangement and can then be subjected to somatic hypermutations which, after exposure to antigen and selection, allow affinity maturation for a particular antigen. This is Immunoglobulin lambda variable 8-61 from Homo sapiens (Human).